The primary structure comprises 357 residues: MRIIITGGGTGGHIYPALAFLKYLKQEEPDTEVLYIGTKKGLESKIVPRAGIQLKTVDIQGLRRSLSPQNIKTAYKFFKSVSDAKKIMKDFKPDVVLGTGGYVAGPVVFAAAQLKIPTIIHEGNSFPGITNRFLAKKVDRIAVGFHAAEQYFPSEKTSFTGNPRAQEVADAAAQVEKFEQPTVVIFGGSRGALKLNNAFIEALPELAKRSFKTVYASGEIYYDDYKETFDQYKENPNLDIRPYINNMTELLAKSQLFLGRSGSTTIAEVTALGLPAVYVPSPNVTADQQTKNAQEYVDQGAAIIVKDEELNGQSLVEAISDILENTEKYQEMQRASLKAGVPDASQRLYNLVKEISN.

UDP-N-acetyl-alpha-D-glucosamine contacts are provided by residues 10–12, Asn-124, Ser-189, Ile-244, and Gln-289; that span reads TGG.

The protein belongs to the glycosyltransferase 28 family. MurG subfamily.

The protein resides in the cell membrane. It catalyses the reaction Mur2Ac(oyl-L-Ala-gamma-D-Glu-L-Lys-D-Ala-D-Ala)-di-trans,octa-cis-undecaprenyl diphosphate + UDP-N-acetyl-alpha-D-glucosamine = beta-D-GlcNAc-(1-&gt;4)-Mur2Ac(oyl-L-Ala-gamma-D-Glu-L-Lys-D-Ala-D-Ala)-di-trans,octa-cis-undecaprenyl diphosphate + UDP + H(+). It functions in the pathway cell wall biogenesis; peptidoglycan biosynthesis. Functionally, cell wall formation. Catalyzes the transfer of a GlcNAc subunit on undecaprenyl-pyrophosphoryl-MurNAc-pentapeptide (lipid intermediate I) to form undecaprenyl-pyrophosphoryl-MurNAc-(pentapeptide)GlcNAc (lipid intermediate II). The sequence is that of UDP-N-acetylglucosamine--N-acetylmuramyl-(pentapeptide) pyrophosphoryl-undecaprenol N-acetylglucosamine transferase from Lactococcus lactis subsp. cremoris (strain MG1363).